A 674-amino-acid chain; its full sequence is Pesticidal crystal protein Cry24Aa (674 aa).

Belongs to the delta endotoxin family.

Its function is as follows. Promotes colloidosmotic lysis by binding to the midgut epithelial cells of insects. In Bacillus thuringiensis subsp. jegathesan, this protein is Pesticidal crystal protein Cry24Aa (cry24Aa).